Here is a 164-residue protein sequence, read N- to C-terminus: MPEQLNTRVEDCFQLAESFFKRPFKRPVVSLKLRGQKAGVAHLHENLLRFNPQLYRENTEHFLKQTVAHEVAHLIAHQLFGDRIQPHGEEWQLIMRGVYELPPDRCHTYEVKRRSVTRYIYKCPCADSDFPFSAQRHSLVRQGRRYLCRRCRNTLVFSGEMRVE.

The SprT-like domain occupies 14–156 (QLAESFFKRP…LCRRCRNTLV (143 aa)). Histidine 69 provides a ligand contact to Zn(2+). Residue glutamate 70 is part of the active site. Histidine 73 lines the Zn(2+) pocket.

This sequence belongs to the SprT family. Zn(2+) serves as cofactor.

The protein localises to the cytoplasm. The polypeptide is Protein SprT (Pseudomonas fluorescens (strain Pf0-1)).